We begin with the raw amino-acid sequence, 274 residues long: Large ribosomal subunit protein uL2 (274 aa).

The disordered stretch occupies residues 224–274 (VAMNPVDHPHGGGEGRTSGGRHPVTPWGIPTKGYKTRKNKRSNKLIVQKRK). Residues 257 to 274 (YKTRKNKRSNKLIVQKRK) show a composition bias toward basic residues.

The protein belongs to the universal ribosomal protein uL2 family. Part of the 50S ribosomal subunit. Forms a bridge to the 30S subunit in the 70S ribosome.

Its function is as follows. One of the primary rRNA binding proteins. Required for association of the 30S and 50S subunits to form the 70S ribosome, for tRNA binding and peptide bond formation. It has been suggested to have peptidyltransferase activity; this is somewhat controversial. Makes several contacts with the 16S rRNA in the 70S ribosome. The chain is Large ribosomal subunit protein uL2 from Francisella philomiragia subsp. philomiragia (strain ATCC 25017 / CCUG 19701 / FSC 153 / O#319-036).